We begin with the raw amino-acid sequence, 542 residues long: Putative ankyrin repeat protein FPV115 (542 aa).

8 ANK repeats span residues 33-62, 157-186, 218-247, 251-281, 285-314, 316-345, 347-375, and 378-407; these read FRNL…DPNS, DGLL…KTNL, NDIN…DINT, KGKT…DINV, EGLT…DVKV, TTST…EFIT, DYLS…DVNS, and CIST…NINA.

The sequence is that of Putative ankyrin repeat protein FPV115 from Fowlpox virus (strain NVSL) (FPV).